The primary structure comprises 114 residues: uncharacterized protein (114 aa).

It to E.coli YfiI and P.aeruginosa RluD.

This is an uncharacterized protein from Escherichia coli O6:H1 (strain CFT073 / ATCC 700928 / UPEC).